The sequence spans 332 residues: tRNA dimethylallyltransferase (332 aa).

G17 to S24 contributes to the ATP binding site. T19 to S24 lines the substrate pocket. Interaction with substrate tRNA stretches follow at residues D42 to Q45 and Q166 to R170.

It belongs to the IPP transferase family. As to quaternary structure, monomer. Mg(2+) is required as a cofactor.

It catalyses the reaction adenosine(37) in tRNA + dimethylallyl diphosphate = N(6)-dimethylallyladenosine(37) in tRNA + diphosphate. Functionally, catalyzes the transfer of a dimethylallyl group onto the adenine at position 37 in tRNAs that read codons beginning with uridine, leading to the formation of N6-(dimethylallyl)adenosine (i(6)A). The sequence is that of tRNA dimethylallyltransferase from Gluconobacter oxydans (strain 621H) (Gluconobacter suboxydans).